A 331-amino-acid chain; its full sequence is Glutamyl-tRNA reductase (331 aa).

Substrate is bound by residues 49–52 (TCNR), Ser107, 112–114 (EDQ), and Gln118. The active-site Nucleophile is the Cys50. 184-189 (GNGEIG) serves as a coordination point for NADP(+).

It belongs to the glutamyl-tRNA reductase family. Homodimer.

It catalyses the reaction (S)-4-amino-5-oxopentanoate + tRNA(Glu) + NADP(+) = L-glutamyl-tRNA(Glu) + NADPH + H(+). It functions in the pathway porphyrin-containing compound metabolism; protoporphyrin-IX biosynthesis; 5-aminolevulinate from L-glutamyl-tRNA(Glu): step 1/2. In terms of biological role, catalyzes the NADPH-dependent reduction of glutamyl-tRNA(Glu) to glutamate 1-semialdehyde (GSA). This chain is Glutamyl-tRNA reductase, found in Acetivibrio thermocellus (strain ATCC 27405 / DSM 1237 / JCM 9322 / NBRC 103400 / NCIMB 10682 / NRRL B-4536 / VPI 7372) (Clostridium thermocellum).